The primary structure comprises 761 residues: Semaphorin-4A (761 aa).

A signal peptide spans 1-32; it reads MALPALGLDPWSLLGLFLFQLLQLLLPTTTAG. The Extracellular segment spans residues 33 to 683; sequence GGGQGPMPRV…LAAQQSYWPH (651 aa). Residues 36 to 494 enclose the Sema domain; it reads QGPMPRVRYY…FSGGVWRVPR (459 aa). An intrachain disulfide couples Cys-113 to Cys-124. N-linked (GlcNAc...) asparagine glycosylation is found at Asn-120 and Asn-135. 3 disulfides stabilise this stretch: Cys-142–Cys-151, Cys-269–Cys-379, and Cys-293–Cys-339. Asn-496 is a glycosylation site (N-linked (GlcNAc...) asparagine). Residues 496-548 form the PSI domain; that stretch reads NCSVYESCVDCVLARDPHCAWDPESRTCCLLSAPNLNSWKQDMERGNPEWACA. Cystine bridges form between Cys-497/Cys-514, Cys-506/Cys-523, and Cys-580/Cys-624. An Ig-like C2-type domain is found at 573–631; sequence NSILELPCPHLSALASYYWSHGPAAVPEASSTVYNGSLLLIVQDGVGGLYQCWATENGF. Asn-607 carries N-linked (GlcNAc...) asparagine glycosylation. A helical transmembrane segment spans residues 684-704; that stretch reads FVTVTVLFALVLSGALIILVA. Residues 705-761 lie on the Cytoplasmic side of the membrane; it reads SPLRALRARGKVQGCETLRPGEKAPLSREQHLQSPKECRTSASDVDADNNCLGTEVA. The disordered stretch occupies residues 722-749; sequence LRPGEKAPLSREQHLQSPKECRTSASDV. The segment covering 723-743 has biased composition (basic and acidic residues); sequence RPGEKAPLSREQHLQSPKECR.

The protein belongs to the semaphorin family. As to quaternary structure, interacts with PLXNB1, PLXNB2, PLXNB3, PLXND1 and TIMD2.

It is found in the cell membrane. Cell surface receptor for PLXNB1, PLXNB2, PLXNB3 and PLXND1 that plays an important role in cell-cell signaling. Regulates glutamatergic and GABAergic synapse development. Promotes the development of inhibitory synapses in a PLXNB1-dependent manner and promotes the development of excitatory synapses in a PLXNB2-dependent manner. Plays a role in priming antigen-specific T-cells, promotes differentiation of Th1 T-helper cells, and thereby contributes to adaptive immunity. Promotes phosphorylation of TIMD2. Inhibits angiogenesis. Promotes axon growth cone collapse. Inhibits axonal extension by providing local signals to specify territories inaccessible for growing axons. In Homo sapiens (Human), this protein is Semaphorin-4A (SEMA4A).